Here is a 509-residue protein sequence, read N- to C-terminus: Inositol-3-phosphate synthase 1 (509 aa).

Belongs to the myo-inositol 1-phosphate synthase family. It depends on NAD(+) as a cofactor. Highly expressed in anthers, but transcripts are undetectable in roots, leaves, flowers and embryos.

Its subcellular location is the cytoplasm. The enzyme catalyses D-glucose 6-phosphate = 1D-myo-inositol 3-phosphate. It functions in the pathway polyol metabolism; myo-inositol biosynthesis; myo-inositol from D-glucose 6-phosphate: step 1/2. Functionally, key enzyme in myo-inositol biosynthesis pathway that catalyzes the conversion of glucose 6-phosphate to 1-myo-inositol 1-phosphate in a NAD-dependent manner. Is a key enzyme in the phytic acid biosynthesis pathway in seeds. In Oryza sativa subsp. japonica (Rice), this protein is Inositol-3-phosphate synthase 1.